The chain runs to 782 residues: Ribosome biogenesis protein ERB1 (782 aa).

Residues 1 to 11 (MSVNSRKRKVA) are compositionally biased toward basic residues. The segment at 1-120 (MSVNSRKRKV…LEGEEDESLK (120 aa)) is disordered. Composition is skewed to acidic residues over residues 39–51 (DESEDDQDAEDTD) and 59–75 (LSDEDFEDEEDSGDEAE). The span at 82-92 (RNLNTSGGSQQ) shows a compositional bias: polar residues. A compositionally biased stretch (acidic residues) spans 106 to 117 (GADGELEGEEDE). WD repeat units lie at residues 432–471 (GQEGRVRCVSVDPQGIFVASGGDDGYVRIWELLTGRQVWN) and 475–516 (SDEE…PDVE). A disordered region spans residues 533-556 (KPSTAANGEAPKQSPGKWSRPGSR). WD repeat units follow at residues 612-652 (RLKG…KILQ), 653-692 (PGAKWISSIDVHPGGDNIIVGTYDKRLLWHDLDLSNKPYK), 696-736 (FHKE…DLME), and 752-782 (KSRLGVMDLDWHPREPWCVSAGADGTLRLWN).

It belongs to the WD repeat BOP1/ERB1 family. Component of the NOP7 complex, composed of ERB1, NOP7 and YTM1. The complex is held together by ERB1, which interacts with NOP7 via its N-terminal domain and with YTM1 via a high-affinity interaction between the seven-bladed beta-propeller domains of the 2 proteins. The NOP7 complex associates with the 66S pre-ribosome.

Its subcellular location is the nucleus. The protein resides in the nucleolus. It is found in the nucleoplasm. Functionally, component of the NOP7 complex, which is required for maturation of the 25S and 5.8S ribosomal RNAs and formation of the 60S ribosome. This Phaeosphaeria nodorum (strain SN15 / ATCC MYA-4574 / FGSC 10173) (Glume blotch fungus) protein is Ribosome biogenesis protein ERB1.